The sequence spans 363 residues: Inositol-3-phosphate synthase (363 aa).

NAD(+)-binding residues include D68, A127, Y147, S190, D225, and K238.

The protein belongs to the myo-inositol 1-phosphate synthase family. As to quaternary structure, monomer. Requires NAD(+) as cofactor.

It carries out the reaction D-glucose 6-phosphate = 1D-myo-inositol 3-phosphate. It participates in polyol metabolism; myo-inositol biosynthesis; myo-inositol from D-glucose 6-phosphate: step 1/2. Its function is as follows. Key enzyme in myo-inositol biosynthesis pathway that catalyzes the conversion of glucose 6-phosphate to 1D-myo-inositol 3-phosphate in a NAD-dependent manner. Plays a key role in oxidative stress resistance as its product is the precursor of the protective antioxidant mycothiol (MSH or AcCys-GlcN-Ins). The sequence is that of Inositol-3-phosphate synthase from Corynebacterium glutamicum (strain ATCC 13032 / DSM 20300 / JCM 1318 / BCRC 11384 / CCUG 27702 / LMG 3730 / NBRC 12168 / NCIMB 10025 / NRRL B-2784 / 534).